The chain runs to 150 residues: Large ribosomal subunit protein bL9 (150 aa).

It belongs to the bacterial ribosomal protein bL9 family.

Functionally, binds to the 23S rRNA. In Photorhabdus laumondii subsp. laumondii (strain DSM 15139 / CIP 105565 / TT01) (Photorhabdus luminescens subsp. laumondii), this protein is Large ribosomal subunit protein bL9.